The chain runs to 317 residues: Putative 2-hydroxyacid dehydrogenase SE_1879 (317 aa).

NAD(+) contacts are provided by residues 155 to 156, 234 to 236, and Asp-260; these read EI and AGR. Arg-236 is a catalytic residue. Residue Glu-265 is part of the active site. The Proton donor role is filled by His-283. Residue 283 to 286 participates in NAD(+) binding; the sequence is HIGN.

The protein belongs to the D-isomer specific 2-hydroxyacid dehydrogenase family.

The sequence is that of Putative 2-hydroxyacid dehydrogenase SE_1879 from Staphylococcus epidermidis (strain ATCC 12228 / FDA PCI 1200).